A 480-amino-acid chain; its full sequence is Endoplasmic reticulum lectin 1 (480 aa).

The N-terminal stretch at 1–27 (MRRSDRFPCAGASLLVVLCGVFPSSFG) is a signal peptide. MRH domains follow at residues 108 to 245 (SSCS…LCNH) and 339 to 466 (SYCF…ICKI). C110 and C123 are joined by a disulfide. Residues 152 to 172 (VKKSPSEAGENQEDKERTEGH) are disordered. Positions 163-172 (QEDKERTEGH) are enriched in basic and acidic residues. 5 disulfide bridges follow: C198/C231, C214/C243, C341/C354, C418/C452, and C433/C464.

Its subcellular location is the endoplasmic reticulum lumen. Probable lectin that binds selectively to improperly folded lumenal proteins. May function in endoplasmic reticulum quality control and endoplasmic reticulum-associated degradation (ERAD) of both non-glycosylated proteins and glycoproteins. The sequence is that of Endoplasmic reticulum lectin 1 (erlec1) from Xenopus laevis (African clawed frog).